Consider the following 278-residue polypeptide: Extracellular metalloprotease GLRG_06511 (278 aa).

Residues 1–19 (MQFKSLLVSALAAASTALA) form the signal peptide. N51 carries N-linked (GlcNAc...) asparagine glycosylation. Residue H190 coordinates Zn(2+). Residue E191 is part of the active site. H194 contributes to the Zn(2+) binding site. C227 and C254 form a disulfide bridge.

This sequence belongs to the peptidase M43B family.

The protein localises to the secreted. Its function is as follows. Secreted metalloproteinase that allows assimilation of proteinaceous substrates. In Colletotrichum graminicola (strain M1.001 / M2 / FGSC 10212) (Maize anthracnose fungus), this protein is Extracellular metalloprotease GLRG_06511.